The sequence spans 885 residues: Probable LRR receptor-like serine/threonine-protein kinase At1g51820 (885 aa).

Residues 1-20 (MERHFVFIATYLLIFHLVQA) form the signal peptide. The Extracellular segment spans residues 21–509 (QNQTGFISVD…GHKKKSVIVP (489 aa)). 13 N-linked (GlcNAc...) asparagine glycosylation sites follow: asparagine 22, asparagine 93, asparagine 135, asparagine 194, asparagine 228, asparagine 250, asparagine 254, asparagine 281, asparagine 287, asparagine 424, asparagine 437, asparagine 456, and asparagine 461. 3 LRR repeats span residues 403–424 (IITS…AIKN), 427–447 (HLQI…EFLA), and 451–473 (SLLV…LLQK). The helical transmembrane segment at 510–530 (VVASIASIAVLIGALVLFLIL) threads the bilayer. The Cytoplasmic segment spans residues 531-885 (RKKRSPKVEG…FGTEVSPNAR (355 aa)). The 274-residue stretch at 578–851 (NNFQRILGKG…QVVIELNECL (274 aa)) folds into the Protein kinase domain. ATP is bound by residues 584-592 (LGKGGFGMV) and lysine 606. Position 651 is a phosphotyrosine (tyrosine 651). The active-site Proton acceptor is aspartate 703. Serine 737 carries the post-translational modification Phosphoserine. Threonine 738 and threonine 743 each carry phosphothreonine. Position 751 is a phosphotyrosine (tyrosine 751).

Belongs to the protein kinase superfamily. Ser/Thr protein kinase family.

Its subcellular location is the membrane. It carries out the reaction L-seryl-[protein] + ATP = O-phospho-L-seryl-[protein] + ADP + H(+). The enzyme catalyses L-threonyl-[protein] + ATP = O-phospho-L-threonyl-[protein] + ADP + H(+). This is Probable LRR receptor-like serine/threonine-protein kinase At1g51820 from Arabidopsis thaliana (Mouse-ear cress).